The following is a 222-amino-acid chain: Probable septum site-determining protein MinC (222 aa).

Belongs to the MinC family. Interacts with MinD and FtsZ.

Cell division inhibitor that blocks the formation of polar Z ring septums. Rapidly oscillates between the poles of the cell to destabilize FtsZ filaments that have formed before they mature into polar Z rings. Prevents FtsZ polymerization. In Lysinibacillus sphaericus (strain C3-41), this protein is Probable septum site-determining protein MinC.